We begin with the raw amino-acid sequence, 176 residues long: uncharacterized protein (176 aa).

Positions 71-176 (RDDMSSDSDG…YSTDDDEDDY (106 aa)) are disordered. 2 stretches are compositionally biased toward low complexity: residues 77–87 (DSDGPAASPPG) and 100–109 (SYSSSDSSAR). The segment covering 140-152 (KARRPARKKKRIG) has biased composition (basic residues).

This is an uncharacterized protein from Orgyia pseudotsugata multicapsid polyhedrosis virus (OpMNPV).